The primary structure comprises 156 residues: MNIVEGKLSLNGDEKVAIINARFNHIITDRLVEGARDAYLRHGGKDENLDLVLVPGAFEIPMALNRLLACSKYDAVCCLGAVIRGSTPHFDYVSAEVTKGVANVALQFAKPVAFGVLTVDSIEQAIERAGSKAGNKGFEAMVTVIELLSLYSALKN.

5-amino-6-(D-ribitylamino)uracil-binding positions include Phe23, 57-59 (AFE), and 81-83 (AVI). 86 to 87 (ST) contributes to the (2S)-2-hydroxy-3-oxobutyl phosphate binding site. The Proton donor role is filled by His89. A 5-amino-6-(D-ribitylamino)uracil-binding site is contributed by Phe114. A (2S)-2-hydroxy-3-oxobutyl phosphate-binding site is contributed by Arg128.

The protein belongs to the DMRL synthase family.

It carries out the reaction (2S)-2-hydroxy-3-oxobutyl phosphate + 5-amino-6-(D-ribitylamino)uracil = 6,7-dimethyl-8-(1-D-ribityl)lumazine + phosphate + 2 H2O + H(+). The protein operates within cofactor biosynthesis; riboflavin biosynthesis; riboflavin from 2-hydroxy-3-oxobutyl phosphate and 5-amino-6-(D-ribitylamino)uracil: step 1/2. In terms of biological role, catalyzes the formation of 6,7-dimethyl-8-ribityllumazine by condensation of 5-amino-6-(D-ribitylamino)uracil with 3,4-dihydroxy-2-butanone 4-phosphate. This is the penultimate step in the biosynthesis of riboflavin. In Sulfurospirillum multivorans (Dehalospirillum multivorans), this protein is 6,7-dimethyl-8-ribityllumazine synthase.